Reading from the N-terminus, the 736-residue chain is Polyribonucleotide nucleotidyltransferase (736 aa).

Asp488 and Asp494 together coordinate Mg(2+). The KH domain maps to 555–614 (PMVQTLEIQKEKIRDVIGLGGKVIKELCKTFDVEIDISENGEVKVWGNVGENVKKAVQSI). An S1 motif domain is found at 624-692 (GDIFDGEVVK…HKNRVKLTLR (69 aa)).

It belongs to the polyribonucleotide nucleotidyltransferase family. The cofactor is Mg(2+).

It localises to the cytoplasm. It carries out the reaction RNA(n+1) + phosphate = RNA(n) + a ribonucleoside 5'-diphosphate. Functionally, involved in mRNA degradation. Catalyzes the phosphorolysis of single-stranded polyribonucleotides processively in the 3'- to 5'-direction. In Orientia tsutsugamushi (strain Ikeda) (Rickettsia tsutsugamushi), this protein is Polyribonucleotide nucleotidyltransferase.